Reading from the N-terminus, the 162-residue chain is Nucleotide-binding protein Adeh_0094 (162 aa).

Belongs to the YajQ family.

Nucleotide-binding protein. In Anaeromyxobacter dehalogenans (strain 2CP-C), this protein is Nucleotide-binding protein Adeh_0094.